A 63-amino-acid chain; its full sequence is Beta-toxin NaTx36 (63 aa).

The LCN-type CS-alpha/beta domain maps to 1 to 62; that stretch reads KDGYPMRSDG…VYDSATSKCR (62 aa). 4 cysteine pairs are disulfide-bonded: Cys11–Cys61, Cys15–Cys36, Cys22–Cys43, and Cys26–Cys45.

This sequence belongs to the long (4 C-C) scorpion toxin superfamily. Sodium channel inhibitor family. Beta subfamily. Expressed by the venom gland.

Its subcellular location is the secreted. Beta toxins bind sodium channels (Nav) and shift the voltage of activation towards more negative potentials thereby affecting sodium channel activation and promoting spontaneous and repetitive firing. Only when tested on grasshopper mouse channels, this toxin inhibits Nav1.8/SCN10A sodium currents in a concentration and voltage-dependent manner (IC(50)=680 nM). This toxin hyperpolarizes the voltage dependence of Nav1.8/SCN10A activation, as well as steady-state fast inactivation and slow inactivation. In contrast to most beta scorpion toxins, this toxin inhibits grasshopper mouse Nav1.8/SCN10A currents through modulation of the domain I S4 voltage sensor, and the domain II second S5-S6 extracellular pore loop. The chain is Beta-toxin NaTx36 from Centruroides sculpturatus (Arizona bark scorpion).